A 287-amino-acid chain; its full sequence is Phosphatidylinositol transfer protein 5 (287 aa).

The disordered stretch occupies residues 252 to 287 (FHNNNNNNSNNSNNNNNNNTQPQRSSFFSRSTDGNK). The segment covering 254 to 270 (NNNNNNSNNSNNNNNNN) has biased composition (low complexity). Residues 271-287 (TQPQRSSFFSRSTDGNK) are compositionally biased toward polar residues.

It belongs to the PtdIns transfer protein family. PI transfer class IIA subfamily.

In terms of biological role, phosphatidylinositol transfer proteins mediate the monomeric transport of lipids by shielding a lipid from the aqueous environment and binding the lipid in a hydrophobic cavity. This Dictyostelium discoideum (Social amoeba) protein is Phosphatidylinositol transfer protein 5 (pitE).